The chain runs to 423 residues: Putative galacturan 1,4-alpha-galacturonidase C (423 aa).

A signal peptide spans 1 to 20 (MRFSIISLVSLPLFLGLTYA). Residues Asn100, Asn120, Asn150, Asn173, and Asn185 are each glycosylated (N-linked (GlcNAc...) asparagine). The active-site Proton donor is Asp229. Residues Cys231 and Cys248 are joined by a disulfide bond. Residue Asn245 is glycosylated (N-linked (GlcNAc...) asparagine). Asn252 is an active-site residue. N-linked (GlcNAc...) asparagine glycans are attached at residues Asn344 and Asn362. A disulfide bond links Cys379 and Cys385. N-linked (GlcNAc...) asparagine glycosylation is present at Asn400. Cys409 and Cys423 are disulfide-bonded.

It belongs to the glycosyl hydrolase 28 family.

It localises to the secreted. The catalysed reaction is [(1-&gt;4)-alpha-D-galacturonosyl](n) + H2O = alpha-D-galacturonate + [(1-&gt;4)-alpha-D-galacturonosyl](n-1). Specific in hydrolyzing the terminal glycosidic bond of polygalacturonic acid and oligogalacturonates. This is Putative galacturan 1,4-alpha-galacturonidase C (rgxC) from Neosartorya fischeri (strain ATCC 1020 / DSM 3700 / CBS 544.65 / FGSC A1164 / JCM 1740 / NRRL 181 / WB 181) (Aspergillus fischerianus).